The sequence spans 306 residues: 1-aminocyclopropane-1-carboxylate oxidase (306 aa).

One can recognise a Fe2OG dioxygenase domain in the interval 153-253; it reads PFFGTKVSHY…RRSIASFYNP (101 aa). 3 residues coordinate Fe cation: H177, D179, and H234.

The protein belongs to the iron/ascorbate-dependent oxidoreductase family. Requires Fe cation as cofactor.

The enzyme catalyses 1-aminocyclopropane-1-carboxylate + L-ascorbate + O2 = ethene + L-dehydroascorbate + hydrogen cyanide + CO2 + 2 H2O. It functions in the pathway alkene biosynthesis; ethylene biosynthesis via S-adenosyl-L-methionine; ethylene from S-adenosyl-L-methionine: step 2/2. The chain is 1-aminocyclopropane-1-carboxylate oxidase (MAO1B) from Musa acuminata (Banana).